The sequence spans 249 residues: 1-(5-phosphoribosyl)-5-[(5-phosphoribosylamino)methylideneamino] imidazole-4-carboxamide isomerase (249 aa).

Aspartate 11 serves as the catalytic Proton acceptor. The active-site Proton donor is the aspartate 133.

Belongs to the HisA/HisF family.

Its subcellular location is the cytoplasm. It carries out the reaction 1-(5-phospho-beta-D-ribosyl)-5-[(5-phospho-beta-D-ribosylamino)methylideneamino]imidazole-4-carboxamide = 5-[(5-phospho-1-deoxy-D-ribulos-1-ylimino)methylamino]-1-(5-phospho-beta-D-ribosyl)imidazole-4-carboxamide. It participates in amino-acid biosynthesis; L-histidine biosynthesis; L-histidine from 5-phospho-alpha-D-ribose 1-diphosphate: step 4/9. The sequence is that of 1-(5-phosphoribosyl)-5-[(5-phosphoribosylamino)methylideneamino] imidazole-4-carboxamide isomerase from Mannheimia succiniciproducens (strain KCTC 0769BP / MBEL55E).